The chain runs to 260 residues: Cytochrome c oxidase subunit 2 (260 aa).

Topologically, residues 1 to 43 are mitochondrial intermembrane; it reads MILRSLSCRFLTIALCDAAEPWQLGFQDAATPMMQGIIDLHHD. A helical membrane pass occupies residues 44–64; that stretch reads IFFFLILILVFVLWMLVRALW. Over 65–84 the chain is Mitochondrial matrix; sequence HFNEQTNPIPQRIVHGTTIE. A helical membrane pass occupies residues 85–105; it reads IIWTIFPSVILLFIAIPSFAL. Residues 106-260 are Mitochondrial intermembrane-facing; the sequence is LYSMDGVLVD…VSNQLILQTN (155 aa). Residues His189, Cys224, Glu226, Cys228, His232, and Met235 each contribute to the Cu cation site. A Mg(2+)-binding site is contributed by Glu226.

The protein belongs to the cytochrome c oxidase subunit 2 family. In terms of assembly, component of the cytochrome c oxidase (complex IV, CIV), a multisubunit enzyme composed of a catalytic core of 3 subunits and several supernumerary subunits. The complex exists as a monomer or a dimer and forms supercomplexes (SCs) in the inner mitochondrial membrane with ubiquinol-cytochrome c oxidoreductase (cytochrome b-c1 complex, complex III, CIII). It depends on Cu cation as a cofactor.

It is found in the mitochondrion inner membrane. It catalyses the reaction 4 Fe(II)-[cytochrome c] + O2 + 8 H(+)(in) = 4 Fe(III)-[cytochrome c] + 2 H2O + 4 H(+)(out). Its function is as follows. Component of the cytochrome c oxidase, the last enzyme in the mitochondrial electron transport chain which drives oxidative phosphorylation. The respiratory chain contains 3 multisubunit complexes succinate dehydrogenase (complex II, CII), ubiquinol-cytochrome c oxidoreductase (cytochrome b-c1 complex, complex III, CIII) and cytochrome c oxidase (complex IV, CIV), that cooperate to transfer electrons derived from NADH and succinate to molecular oxygen, creating an electrochemical gradient over the inner membrane that drives transmembrane transport and the ATP synthase. Cytochrome c oxidase is the component of the respiratory chain that catalyzes the reduction of oxygen to water. Electrons originating from reduced cytochrome c in the intermembrane space (IMS) are transferred via the dinuclear copper A center (CU(A)) of subunit 2 and heme A of subunit 1 to the active site in subunit 1, a binuclear center (BNC) formed by heme A3 and copper B (CU(B)). The BNC reduces molecular oxygen to 2 water molecules using 4 electrons from cytochrome c in the IMS and 4 protons from the mitochondrial matrix. The sequence is that of Cytochrome c oxidase subunit 2 (COX2) from Triticum aestivum (Wheat).